The sequence spans 440 residues: Cytochrome c biogenesis protein Ccs1 (440 aa).

3 helical membrane-spanning segments follow: residues 25–45 (LQFS…GTVI), 84–104 (TWWF…CSIS), and 170–190 (LAPI…VLGL).

Belongs to the Ccs1/CcsB family. May interact with CcsA.

It localises to the plastid. Its subcellular location is the chloroplast thylakoid membrane. Its function is as follows. Required during biogenesis of c-type cytochromes (cytochrome c6 and cytochrome f) at the step of heme attachment. In Pyropia yezoensis (Susabi-nori), this protein is Cytochrome c biogenesis protein Ccs1.